The chain runs to 146 residues: MSSVKRLDINYKTDELFEDFRNFGNKDLYLVDELRGEMIDASSDSPFYGIYVGDCLGARMALYRKGEVEETHFPGFDDYNVIWKLEVLRDFQGRGYGTSLLDFAKDQGLPIKVIARNQSKDFFIKQGFTDLEETNRDGHDVLVWTP.

The 140-residue stretch at 7–146 (LDINYKTDEL…DGHDVLVWTP (140 aa)) folds into the N-acetyltransferase domain.

This is an uncharacterized protein from Staphylococcus saprophyticus subsp. saprophyticus (strain ATCC 15305 / DSM 20229 / NCIMB 8711 / NCTC 7292 / S-41).